The primary structure comprises 476 residues: Cysteine--tRNA ligase (476 aa).

C28 lines the Zn(2+) pocket. Residues 30 to 40 carry the 'HIGH' region motif; the sequence is PTVYDNTHLGH. The Zn(2+) site is built by C208, H233, and E237. A 'KMSKS' region motif is present at residues 265-269; the sequence is KMSKS. K268 serves as a coordination point for ATP.

The protein belongs to the class-I aminoacyl-tRNA synthetase family. The cofactor is Zn(2+).

It is found in the cytoplasm. The catalysed reaction is tRNA(Cys) + L-cysteine + ATP = L-cysteinyl-tRNA(Cys) + AMP + diphosphate. The protein is Cysteine--tRNA ligase of Methanococcus maripaludis (strain DSM 14266 / JCM 13030 / NBRC 101832 / S2 / LL).